Reading from the N-terminus, the 652-residue chain is Acetyl-coenzyme A synthetase (652 aa).

Residues 191 to 194, Thr311, and Asn335 each bind CoA; that span reads RAGR. ATP is bound by residues 387–389, 411–416, Asp500, and Arg515; these read GEP and DTWWQT. Ser523 provides a ligand contact to CoA. An ATP-binding site is contributed by Arg526. The Mg(2+) site is built by Val537, His539, and Ile542. Arg584 is a CoA binding site. Lys609 is modified (N6-acetyllysine).

This sequence belongs to the ATP-dependent AMP-binding enzyme family. Requires Mg(2+) as cofactor. In terms of processing, acetylated. Deacetylation by the SIR2-homolog deacetylase activates the enzyme.

The catalysed reaction is acetate + ATP + CoA = acetyl-CoA + AMP + diphosphate. Functionally, catalyzes the conversion of acetate into acetyl-CoA (AcCoA), an essential intermediate at the junction of anabolic and catabolic pathways. Acs undergoes a two-step reaction. In the first half reaction, Acs combines acetate with ATP to form acetyl-adenylate (AcAMP) intermediate. In the second half reaction, it can then transfer the acetyl group from AcAMP to the sulfhydryl group of CoA, forming the product AcCoA. Enables the cell to use acetate during aerobic growth to generate energy via the TCA cycle, and biosynthetic compounds via the glyoxylate shunt. Acetylates CheY, the response regulator involved in flagellar movement and chemotaxis. This Cronobacter sakazakii (strain ATCC BAA-894) (Enterobacter sakazakii) protein is Acetyl-coenzyme A synthetase.